The chain runs to 146 residues: Small ribosomal subunit protein uS9 (146 aa).

This sequence belongs to the universal ribosomal protein uS9 family. Component of the small ribosomal subunit.

The protein localises to the cytoplasm. Component of the small ribosomal subunit. The ribosome is a large ribonucleoprotein complex responsible for the synthesis of proteins in the cell. The sequence is that of Small ribosomal subunit protein uS9 (rps16) from Ictalurus punctatus (Channel catfish).